We begin with the raw amino-acid sequence, 348 residues long: MARFNAAFTRIKIMFSRIRGLISCQSNTQTIAPTLSPPSSGHVSFAGIDYPLLPLNHQTPLVFQWFERNPDRFGQNEIPIINTQKNPYLNNIINAAIIEKERIIGIFVDGDFSKGQRKALGKLEQNYRNIKVIYNSDLNYSMYDKKLTTIYLENITKLEAQSASERDEVLLNGVKKSLEDVLKNNPEETLISSHNKDKGHLWFDFYRNLFLLKGSDAFLEAGKPGCHHLQPGGGCIYLDADMLLTDKLGTLYLPDGIAIHVSRKDNHVSLENGIIAVNRSEHPALIKGLEIMHSKPYGDPYNDWLSKGLRHYFDGSHIQDYDAFCDFIEFKHENIIMNTSSLTASSWR.

UDP-N-acetyl-alpha-D-glucosamine is bound by residues 64–66 (QWF), tyrosine 88, and 237–240 (YLDA). Positions 239 to 241 (DAD) match the DXD motif motif. Aspartate 241 serves as a coordination point for Mn(2+). Glutamate 271 (proton acceptor) is an active-site residue. UDP-N-acetyl-alpha-D-glucosamine is bound by residues asparagine 338, serine 340, and 345–348 (SSWR). Mn(2+)-binding residues include asparagine 338 and serine 340.

It belongs to the glycosyltransferase NleB family. Mn(2+) is required as a cofactor.

The protein localises to the secreted. The protein resides in the host Golgi apparatus. The enzyme catalyses L-arginyl-[protein] + UDP-N-acetyl-alpha-D-glucosamine = N(omega)-(N-acetyl-beta-D-glucosaminyl)-L-arginyl-[protein] + UDP + H(+). Its activity is regulated as follows. Protein-arginine N-acetylglucosaminyltransferase activity is inhibited by 100066N compound (flavone analog) and 102644N compound (a substituted isoxazole). Its function is as follows. Protein-arginine N-acetylglucosaminyltransferase effector that catalyzes the transfer of a single N-acetylglucosamine (GlcNAc) to a conserved arginine residue in the death domain of host proteins such as FADD: arginine GlcNAcylation prevents homotypic/heterotypic death domain interactions. Also acts on host proteins without a death domain: catalyzes arginine GlcNAcylation of host small Rab1 GTPase, thereby preventing GTPase activity and leading to impaired host vesicular protein transport. In contrast to Ssek1, not able to disrupt TNF signaling in infected cells. The sequence is that of Protein-arginine N-acetylglucosaminyltransferase SseK2 from Salmonella typhimurium (strain SL1344).